The following is a 206-amino-acid chain: Ribosomal RNA large subunit methyltransferase E (206 aa).

Residues G60, W62, D80, D96, and D121 each coordinate S-adenosyl-L-methionine. The Proton acceptor role is filled by K161.

It belongs to the class I-like SAM-binding methyltransferase superfamily. RNA methyltransferase RlmE family.

The protein localises to the cytoplasm. It carries out the reaction uridine(2552) in 23S rRNA + S-adenosyl-L-methionine = 2'-O-methyluridine(2552) in 23S rRNA + S-adenosyl-L-homocysteine + H(+). In terms of biological role, specifically methylates the uridine in position 2552 of 23S rRNA at the 2'-O position of the ribose in the fully assembled 50S ribosomal subunit. In Legionella pneumophila (strain Lens), this protein is Ribosomal RNA large subunit methyltransferase E.